Here is a 74-residue protein sequence, read N- to C-terminus: uncharacterized protein (74 aa).

Residues 39-74 (SSPQAPGTLKPRALVRPSPGPVQENHLSEAQFPPKL) are disordered.

This is an uncharacterized protein from Homo sapiens (Human).